Here is a 393-residue protein sequence, read N- to C-terminus: MTISSARTARRLPDLTSSAFLVIAFLTGIAGALQLPTLSLFLSTEVQVRPFMVGLFYTGSAVIGIVVSQILATYSDRQGDRKTLILQCCLLGALACLLYAWNRNYFVLLFIGVLLSSFGSTANPQLFALAREHADRTGRGAAMFSSVMRAQISLSWVIGPPVAFALALGFGFPAMYLTAAVVFVLCGLLVWLLLPSMPKTRVKSAATLESPRQNRRDTLLLFTACTLMWTCNGIYLINMPLYLVNELRLPEKLAGVMMGTAAGLEIPVMLLAGYLTSRLGKRLLMRLAVIAGLIFYTGLTLLNGSWALLALQLLNAIFIGILAGMGMLYFQDLMPGQAGAATTLFTNTTRVGWIISGSLAGIVAEVWSYHAGFVIAIAMLAGAAVCMWRIRDV.

Helical transmembrane passes span 22-42 (VIAFLTGIAGALQLPTLSLFL), 51-71 (FMVGLFYTGSAVIGIVVSQIL), 82-102 (KTLILQCCLLGALACLLYAWN), 107-127 (VLLFIGVLLSSFGSTANPQLF), 152-172 (ISLSWVIGPPVAFALALGFGF), 174-194 (AMYLTAAVVFVLCGLLVWLLL), 219-239 (LLLFTACTLMWTCNGIYLINM), 253-273 (LAGVMMGTAAGLEIPVMLLAG), 287-307 (LAVIAGLIFYTGLTLLNGSWA), 308-328 (LLALQLLNAIFIGILAGMGML), 344-364 (LFTNTTRVGWIISGSLAGIVA), and 366-386 (VWSYHAGFVIAIAMLAGAAVC).

It belongs to the major facilitator superfamily. Set transporter family.

The protein resides in the cell inner membrane. Functionally, involved in the efflux of sugars. The physiological role may be the reduction of the intracellular concentration of toxic sugars or sugar metabolites. Transports IPTG, lactose and arabinose. The chain is Sugar efflux transporter A (sotA) from Dickeya chrysanthemi (Pectobacterium chrysanthemi).